The chain runs to 468 residues: Meiotically up-regulated gene 111 protein (468 aa).

A run of 12 helical transmembrane segments spans residues 13 to 33 (LVLI…NSVT), 59 to 79 (IVSA…VPFY), 92 to 112 (VFTT…SILY), 116 to 136 (FPTC…ISGT), 158 to 178 (IVVL…LGSI), 190 to 210 (LISW…AVFF), 285 to 305 (PIPI…FFDI), 330 to 350 (FGSL…GFSV), 356 to 376 (TMLI…FATA), 382 to 402 (LALF…LVAA), 417 to 437 (ALLE…AFIV), and 446 to 466 (FFIG…LLLG).

It is found in the membrane. Its function is as follows. Has a role in meiosis. The chain is Meiotically up-regulated gene 111 protein (mug111) from Schizosaccharomyces pombe (strain 972 / ATCC 24843) (Fission yeast).